The chain runs to 195 residues: 4'-phosphopantetheinyl transferase AcpT (195 aa).

The protein belongs to the P-Pant transferase superfamily. Gsp/Sfp/HetI/AcpT family.

It catalyses the reaction apo-[ACP] + CoA = holo-[ACP] + adenosine 3',5'-bisphosphate + H(+). Its function is as follows. May be involved in an alternative pathway for phosphopantetheinyl transfer and holo-ACP synthesis in E.coli. The native apo-protein substrate is unknown. Is able to functionally replace AcpS in vivo but only when expressed at high levels. The protein is 4'-phosphopantetheinyl transferase AcpT (acpT) of Escherichia coli O157:H7.